The chain runs to 1071 residues: MPAIMTMLADHAARQLLDFSQKLDINLLDNVVNCLYHGEGAQQRMAQEVLTHLKEHPDAWTRVDTILEFSQNMNTKYYGLQILENVIKTRWKILPRNQCEGIKKYVVGLIIKTSSDPTCVEKEKVYIGKLNMILVQILKQEWPKHWPTFISDIVGASRTSESLCQNNMVILKLLSEEVFDFSSGQITQVKAKHLKDSMCNEFSQIFQLCQFVMENSQNAPLVHATLETLLRFLNWIPLGYIFETKLISTLIYKFLNVPMFRNVSLKCLTEIAGVSVSQYEEQFETLFTLTMMQLKQMLPLNTNIRLAYSNGKDDEQNFIQNLSLFLCTFLKEHGQLLEKRLNLREALMEALHYMLLVSEVEETEIFKICLEYWNHLAAELYRESPFSTSASPLLSGSQHFDIPPRRQLYLTVLSKVRLLMVSRMAKPEEVLVVENDQGEVVREFMKDTDSINLYKNMRETLVYLTHLDYVDTEIIMTKKLQNQVNGTEWSWKNLNTLCWAIGSISGAMHEEDEKRFLVTVIKDLLGLCEQKRGKDNKAIIASNIMYIVGQYPRFLRAHWKFLKTVVNKLFEFMHETHDGVQDMACDTFIKIAQKCRRHFVQVQVGEVMPFIDEILNNINTIICDLQPQQVHTFYEAVGYMIGAQTDQTVQEHLIEKYMLLPNQVWDSIIQQATKNVDILKDPETVKQLGSILKTNVRACKAVGHPFVIQLGRIYLDMLNVYKCLSENISAAIQANGEMVTKQPLIRSMRTVKRETLKLISGWVSRSNDPQMVAENFVPPLLDAVLIDYQRNVPAAREPEVLSTMAIIVNKLGGHITAEIPQIFDAVFECTLNMINKDFEEYPEHRTNFFLLLQAVNSHCFPAFLAIPPAQFKLVLDSIIWAFKHTMRNVADTGLQILFTLLQNVAQEEAAAQSFYQTYFCDILQHIFSVVTDTSHTAGLTMHASILAYMFNLVEEGKISTPLNPGSPVSNQMFIQDYVANLLKSAFPHLQDAQVKLFVTGLFSLNQDIPAFKEHLRDFLVQIKEFAGEDTSDLFLEERETALRQAQEEKHKLQMSVPGILNPHEIPEEMCD.

Residues 46–112 enclose the Importin N-terminal domain; sequence AQEVLTHLKE…KKYVVGLIIK (67 aa). HEAT repeat units follow at residues 217 to 240, 241 to 277, 354 to 472, 515 to 553, 560 to 597, and 602 to 639; these read QNAPLVHATLETLLRFLNWIPLGY, IFETKLISTLIYKFLNVPMFRNVSLKCLTEIAGVSVS, MLLV…YVDT, RFLVTVIKDLLGLCEQKRGKDNKAIIASNIMYIVGQYPR, KFLKTVVNKLFEFMHETHDGVQDMACDTFIKIAQKCRR, and VQVGEVMPFIDEILNNINTIICDLQPQQVHTFYEAVGY. Positions 327–450 are necessary for interaction with Ran and nuclear export complex formation; that stretch reads CTFLKEHGQL…VREFMKDTDS (124 aa). The residue at position 391 (S391) is a Phosphoserine. The necessary for interaction with RANBP3 stretch occupies residues 411–481; that stretch reads TVLSKVRLLM…TEIIMTKKLQ (71 aa). K446 is subject to N6-acetyllysine. A Phosphothreonine modification is found at T448. A Phosphoserine modification is found at S450. Y454 is subject to Phosphotyrosine. The residue at position 693 (K693) is an N6-acetyllysine. 3 HEAT repeats span residues 775–813, 885–916, and 917–954; these read NFVPPLLDAVLIDYQRNVPAAREPEVLSTMAIIVNKLGG, TMRNVADTGLQILFTLLQNVAQEEAAAQSFYQ, and TYFCDILQHIFSVVTDTSHTAGLTMHASILAYMFNLVE. A phosphoserine mark is found at S966 and S1031. Residues 1002–1039 form an HEAT 10 repeat; sequence FSLNQDIPAFKEHLRDFLVQIKEFAGEDTSDLFLEERE.

Belongs to the exportin family. Found in a U snRNA export complex with PHAX/RNUXA, NCBP1/CBP80, NCBP2/CBP20, RAN, XPO1 and m7G-capped RNA. Component of a nuclear export receptor complex composed of KPNB1, RAN, SNUPN and XPO1. Found in a trimeric export complex with SNUPN, RAN and XPO1. Found in a nuclear export complex with RANBP3 and RAN. Found in a 60S ribosomal subunit export complex with NMD3, RAN, XPO1. Interacts with DDX3X, NMD3, NUP42, NUP88, NUP214, RANBP3 and TERT. Interacts with NEMF (via its N-terminus). Interacts with the monomeric form of BIRC5/survivin deacetylated at 'Lys-129'. Interacts with DTNBP1 and SERTAD2; the interactions translocate DTNBP1 and SERTAD2 out of the nucleus. Interacts with ATF2. Interacts with SLC35G1 and STIM1. Interacts with DCAF8. Interacts with CPEB3. Interacts with HAX1. Interacts with BOK; translocates to the cytoplasm. Interacts with HSP90AB1. Interacts with LRPPRC; interacts with LRPPRC alone and also when LRPPRC is in complex with EIF4E and with EIF4E sensitivity element (4ESE)-containing mRNAs to form an EIF4E-dependent mRNA export complex.

It is found in the cytoplasm. The protein resides in the nucleus. It localises to the nucleoplasm. Its subcellular location is the cajal body. The protein localises to the nucleolus. Functionally, mediates the nuclear export of cellular proteins (cargos) bearing a leucine-rich nuclear export signal (NES) and of RNAs. In the nucleus, in association with RANBP3, binds cooperatively to the NES on its target protein and to the GTPase Ran in its active GTP-bound form. Docking of this complex to the nuclear pore complex (NPC) is mediated through binding to nucleoporins. Upon transit of a nuclear export complex into the cytoplasm, disassembling of the complex and hydrolysis of Ran-GTP to Ran-GDP (induced by RANBP1 and RANGAP1, respectively) cause release of the cargo from the export receptor. The directionality of nuclear export is thought to be conferred by an asymmetric distribution of the GTP- and GDP-bound forms of Ran between the cytoplasm and nucleus. Involved in U3 snoRNA transport from Cajal bodies to nucleoli. Binds to late precursor U3 snoRNA bearing a TMG cap. The chain is Exportin-1 (Xpo1) from Rattus norvegicus (Rat).